Reading from the N-terminus, the 124-residue chain is MAVSSAVRMLSVACLVVSAAGMRRLGDCSSSADCGPGACCTIGFNRYSIPQCTPLGDLGDWCRVMNPPRELSLAYPNGLQVLLTDSYHGMCPCRPELACSRATSTCQLPQESTQHQEDNSLYKD.

The N-terminal stretch at 1–21 is a signal peptide; sequence MAVSSAVRMLSVACLVVSAAG. 5 cysteine pairs are disulfide-bonded: C28/C40, C34/C52, C39/C91, C62/C99, and C93/C106.

Belongs to the AVIT (prokineticin) family.

The protein resides in the secreted. Cytokine directly involved in hematopoiesis. The polypeptide is Astakine (Penaeus monodon (Giant tiger prawn)).